The following is a 507-amino-acid chain: Protein adenylyltransferase fic-1 (507 aa).

A helical membrane pass occupies residues 40 to 56; the sequence is YSLTTVVLVSLVVTLVC. 2 TPR repeats span residues 146-179 and 180-213; these read AILA…APNN and PQIL…DPGN. The short motif at 269–274 is the Inhibitory (S/T)XXXE(G/N) motif element; the sequence is TVAIEG. ATP is bound at residue glutamate 273. Positions 325-460 constitute a Fido domain; it reads ISIDDILEMH…LRPFVRYVAK (136 aa). Threonine 351 carries the O-AMP-threonine; by autocatalysis modification. ATP is bound at residue 356-359; that stretch reads VGKF. Histidine 403 is an active-site residue. ATP-binding positions include 407-414, 439-440, and asparagine 447; these read DGNGRTAR and YY. Threonine 475 bears the O-AMP-threonine; by autocatalysis mark. Residues 482–507 form a disordered region; that stretch reads NGEEPNLTAEESKVSEKIETECRAGS. Positions 491–507 are enriched in basic and acidic residues; it reads EESKVSEKIETECRAGS.

This sequence belongs to the fic family. In terms of assembly, forms homodimers; homodimerization might be required for adenylyltransferase activity.

Its subcellular location is the endoplasmic reticulum membrane. The protein resides in the nucleus membrane. It carries out the reaction L-tyrosyl-[protein] + ATP = O-(5'-adenylyl)-L-tyrosyl-[protein] + diphosphate. It catalyses the reaction L-threonyl-[protein] + ATP = 3-O-(5'-adenylyl)-L-threonyl-[protein] + diphosphate. The catalysed reaction is 3-O-(5'-adenylyl)-L-threonyl-[protein] + H2O = L-threonyl-[protein] + AMP + H(+). The side chain of Glu-273 determines which of the two opposing activities (AMPylase or de-AMPylase) will take place. In response to endoplasmic reticulum stress, mediates de-AMPylase activity. Adenylyltransferase activity is inhibited by the inhibitory helix present at the N-terminus: Glu-273 binds ATP and competes with ATP-binding at Arg-414, thereby preventing adenylyltransferase activity. In unstressed cells, disengagement of Glu-273 promotes adenylyltransferase activity. Activation dissociates ATP-binding from Glu-273, allowing ordered binding of the entire ATP moiety with the alpha-phosphate in an orientation that is productive for accepting an incoming target hydroxyl side chain. In terms of biological role, protein that can both mediate the addition of adenosine 5'-monophosphate (AMP) to specific residues of target proteins (AMPylation), and the removal of the same modification from target proteins (de-AMPylation), depending on the context. The side chain of Glu-273 determines which of the two opposing activities (AMPylase or de-AMPylase) will take place. Adenylyltransferase that mediates the addition of adenosine 5'-monophosphate (AMP) to specific residues of target proteins. In vivo target proteins include the heat-shock 70 family proteins hsp-1 and hsp-3 and the translation elongation factors eef-1A, eef-1G and eef-2. Can AMPylate core histone H3 in vitro. Can also act as a phosphodiesterase by mediating removal of ATP (de-AMPylation) from target proteins. Decreases susceptibility to P.aeruginosa-mediated killing and might therefore play a role in the innate immune response. This is Protein adenylyltransferase fic-1 (fic-1) from Caenorhabditis briggsae.